We begin with the raw amino-acid sequence, 846 residues long: Outer membrane channel protein CpnT (846 aa).

Residues 1–443 (MAPLAVDPAA…AGVRGLKERL (443 aa)) form an NTD region. Residues 442-630 (RLEPTTPHLE…SGSEPPGLHA (189 aa)) are disordered. Composition is skewed to pro residues over residues 450–466 (LEPPATPPRPGPQPPRI) and 475–504 (APAPAAKPAPVPANGPLPHSPTESKPPPVD). 2 stretches are compositionally biased toward low complexity: residues 508 to 517 (EPVAPSSASA) and 562 to 586 (APATAHQPQWATTPAAPAAAPHSTP). The segment at 651 to 846 (RLSDEAVDPQ…ELIRRGVLRQ (196 aa)) is TNT. Residues 751–846 (YGPQLDRIGG…ELIRRGVLRQ (96 aa)) form the TNT domain. The active site involves R757. R780 is a binding site for NAD(+). Residue Q822 is part of the active site.

In terms of assembly, interacts with the immunity factor for TNT (IFT) homolog. The C-terminal domain (TNT) is probably cleaved.

Its subcellular location is the cell outer membrane. It localises to the secreted. The protein resides in the cell surface. The enzyme catalyses NAD(+) + H2O = ADP-D-ribose + nicotinamide + H(+). With respect to regulation, glycohydrolase activity is completely inhibited by interaction with the immunity factor for TNT (IFT) homolog. This inhibition protects M.bovis from self-poisoning. The N-terminal domain (NTD) forms an outer membrane channel and is used for uptake of nutrients across the outer membrane. Also confers susceptibility to structurally different antibiotics and antituberculosis drugs, and to toxic immune factors such as nitric oxide (NO). The C-terminal domain (TNT) is dispensable for normal growth in macrophages. The sequence is that of Outer membrane channel protein CpnT from Mycobacterium bovis (strain BCG / Pasteur 1173P2).